A 138-amino-acid chain; its full sequence is Basic phospholipase A2 homolog Tpu-K49a (138 aa).

A signal peptide spans 1–16 (MRTLWIMAVLLVGVEG). Cystine bridges form between Cys-42/Cys-131, Cys-44/Cys-60, Cys-59/Cys-111, Cys-65/Cys-138, Cys-66/Cys-104, and Cys-91/Cys-102. Residues 121–133 (KKERINTKIFCKK) are important for membrane-damaging activities in eukaryotes and bacteria; heparin-binding.

In terms of assembly, monomer. In terms of tissue distribution, expressed by the venom gland.

It is found in the secreted. Functionally, snake venom phospholipase A2 homolog that lacks catalytic activity. Induces local edema a few hours after injection in the hind foot. Is myotoxic. A model of myotoxic mechanism has been proposed: an apo Lys49-PLA2 is activated by the entrance of a hydrophobic molecule (e.g. fatty acid) at the hydrophobic channel of the protein leading to a reorientation of a monomer. This reorientation causes a transition between 'inactive' to 'active' states, causing alignment of C-terminal and membrane-docking sites (MDoS) side-by-side and putting the membrane-disruption sites (MDiS) in the same plane, exposed to solvent and in a symmetric position for both monomers. The MDoS region stabilizes the toxin on membrane by the interaction of charged residues with phospholipid head groups. Subsequently, the MDiS region destabilizes the membrane with penetration of hydrophobic residues. This insertion causes a disorganization of the membrane, allowing an uncontrolled influx of ions (i.e. calcium and sodium), and eventually triggering irreversible intracellular alterations and cell death. This is Basic phospholipase A2 homolog Tpu-K49a from Craspedocephalus puniceus (Flat-nosed pitviper).